The chain runs to 351 residues: O-methyltransferase apf6 (351 aa).

S-adenosyl-L-methionine contacts are provided by residues 231–232, 279–280, and Arg295; these read GG and NF. His299 (proton acceptor) is an active-site residue.

Belongs to the class I-like SAM-binding methyltransferase superfamily. Cation-independent O-methyltransferase family.

The protein operates within secondary metabolite biosynthesis. Functionally, O-methyltransferase; part of the gene cluster that mediates the biosynthesis of the cyclic tetrapeptide apicidin F (APF). The non-ribosomal peptide synthetase apf1 incorporates four different amino acids to produce apicidin F: L-phenylalanine, D-pipecolic acid (D-pip), N-methoxy-L-tryptophan and L-2-aminooctanedioic acid. L-Phenylalanine is the only proteinogenic amino acid directly used by apf1. The 3 other apf1 substrates are non-proteinogenic and have to be modified by other enzymes of the cluster. Lysine is converted to delta-1-pyrroline-5-carboxylate (P5C) which is reduced to L-pipecolic acid (L-pip) by apf3. L-pip is epimerized to D-pip, probably by apf1 activity, prior to incorporation. L-Tryptophan is N-oxidyzed by one of the cytochrome P450 monooxygenases (apf7 or apf8), and further methylated at the hydroxy group by the O-methyltransferase apf6 to yield N-methoxy-L-tryptophan. The synthesis of the fourth apf1 substrate is more complex. The fatty acid synthase apf5 is involved in the synthesis of the octanoic acid backbone of L-2-aminooctanedioic acid by fixing one acetyl-CoA unit and three malonyl-CoA units. Then one of the cytochrome P450 monooxygenases (apf7 or apf8) may oxidize this backbone to 2-oxooctanoic acid. The aminotransferase apf4 is predicted to catalyze the exchange of the keto group with an amino group. The next step would be the oxidation of 2-aminooctanoic acid by one of the cytochrome P450 monooxygenases (apf7 or apf8). The last step is the oxidation of 2-amino-8-hydroxyoctanoic acid to 2-aminooctanedioic acid is catalyzed by the FAD-dependent monooxygenase apf9. This chain is O-methyltransferase apf6, found in Gibberella fujikuroi (strain CBS 195.34 / IMI 58289 / NRRL A-6831) (Bakanae and foot rot disease fungus).